The sequence spans 211 residues: Ribonuclease HII (211 aa).

Residues alanine 16–valine 205 form the RNase H type-2 domain. Positions 22, 23, and 114 each coordinate a divalent metal cation.

It belongs to the RNase HII family. Mn(2+) is required as a cofactor. The cofactor is Mg(2+).

Its subcellular location is the cytoplasm. It carries out the reaction Endonucleolytic cleavage to 5'-phosphomonoester.. Its function is as follows. Endonuclease that specifically degrades the RNA of RNA-DNA hybrids. This Caulobacter vibrioides (strain ATCC 19089 / CIP 103742 / CB 15) (Caulobacter crescentus) protein is Ribonuclease HII (rnhB).